We begin with the raw amino-acid sequence, 460 residues long: Mitochondrial distribution and morphology protein 34 (460 aa).

One can recognise an SMP-LTD domain in the interval 1–196 (MSFKFDWESL…LPGIIHRLSQ (196 aa)). A compositionally biased stretch (basic residues) spans 304-321 (HNHQAPKRRTIKYKRKSK). 2 disordered regions span residues 304–356 (HNHQ…PSRE) and 368–460 (EPSS…AYSG). Low complexity-rich tracts occupy residues 330–355 (STEV…TPSR) and 393–405 (SPPS…DTSL).

The protein belongs to the MDM34 family. Component of the ER-mitochondria encounter structure (ERMES) or MDM complex, composed of MMM1, MDM10, MDM12 and MDM34.

The protein resides in the mitochondrion outer membrane. In terms of biological role, component of the ERMES/MDM complex, which serves as a molecular tether to connect the endoplasmic reticulum (ER) and mitochondria. Components of this complex are involved in the control of mitochondrial shape and protein biogenesis, and function in nonvesicular lipid trafficking between the ER and mitochondria. MDM34 is required for the interaction of the ER-resident membrane protein MMM1 and the outer mitochondrial membrane-resident beta-barrel protein MDM10. In Yarrowia lipolytica (strain CLIB 122 / E 150) (Yeast), this protein is Mitochondrial distribution and morphology protein 34.